Reading from the N-terminus, the 186-residue chain is UPF0301 protein PM1869 (186 aa).

The protein belongs to the UPF0301 (AlgH) family.

The chain is UPF0301 protein PM1869 from Pasteurella multocida (strain Pm70).